The primary structure comprises 406 residues: Sensor histidine kinase YxjM (406 aa).

Over 1 to 13 (MNGQTPARHYYKK) the chain is Cytoplasmic. Residues 14–34 (LVPSLILILNCIQFLSHPTKA) form a helical membrane-spanning segment. The Extracellular portion of the chain corresponds to 35–36 (DP). The chain crosses the membrane as a helical span at residues 37-57 (ILLAFVFAVYLAFIWIIPYVA). Ser-58 is a topological domain (cytoplasmic). Transmembrane regions (helical) follow at residues 59–79 (TAVS…FWAV) and 80–100 (SGQE…YAAF). Residue Arg-101 is a topological domain, cytoplasmic. A helical transmembrane segment spans residues 102–122 (LPSRLSLIFTACLIGGNILLL). Topologically, residues 123-125 (SSQ) are extracellular. The helical transmembrane segment at 126–146 (GGSLNTIISNISIMLGLYVLF) threads the bilayer. The Cytoplasmic portion of the chain corresponds to 147–406 (SSMRFRREAR…TNKEQKDEQR (260 aa)). The Histidine kinase domain maps to 209-396 (DIHDSIGHEL…KIELSLPLMT (188 aa)). The residue at position 211 (His-211) is a Phosphohistidine; by autocatalysis.

It is found in the cell membrane. The enzyme catalyses ATP + protein L-histidine = ADP + protein N-phospho-L-histidine.. Functionally, probable member of the two-component regulatory system YxjM/YxjL. May activate YxjL by phosphorylation. The polypeptide is Sensor histidine kinase YxjM (yxjM) (Bacillus subtilis (strain 168)).